We begin with the raw amino-acid sequence, 961 residues long: MTAHRIPLSDLEQGIPFEQRHIGPDSEARAKMLAQVGYGSLDELTATAVPDVIKNAEALELPGARTEAEVLAELRSLADRNQVLGSMIGLGYYGTFTPPVILRNVMENPAWYTAYTPYQPEISQGRLEALLNFQTVVAELTGLPTSGASLLDEGTAAAEAMALSRRMGKNKKGLFLVDADALPQTIAVIETRAEPTGVEVVVADLSEGIPAGIAEREINGVLIQYPGASGAVRDIKPLVEQAHELGAVVTVAADLLALTLLTSPGELGADIAVGTTQRFGVPMGFGGPHAGYMAVREKFARSLPGRLVGVSVDADGHKAYRLALQTREQHIRREKATSNICTAQVLLAVMAGMYAVYHGPDGLRTIARRTHRYATILAEGLKAGGVEVVHGAYFDTLTARVPGRAAEIVAAAREGGVNLHLVDADLVSISCDETTTRAQLGAVWTAFGVEGDIEALDAAAEDTLPAALLRTDDYLTHPVFHQYRSETAMLRYLRRLSDRDYALDRGMIPLGSCTMKLNATTEMEPVTWPEFGQLHPFAPAEQAQGYLTLIRELEERLAEVTGYDKVSLQPNAGSQGELAGLLAVRGYHRANGDEQRTVCLIPSSAHGTNAASAVMAGMKVVVVKTADDGEIDVEDLRAKIEQYRDELSVLMITYPSTHGVFEEHVADICAQVHEAGGQVYVDGANLNALVGLAKPGHFGGDVSHLNLHKTFCIPHGGGGPGVGPVGVRAHLAPYLPNHPLQPEAGPATGVGPISAAPWGSAGILPISWSYVRLMGGEGLKRATQVAVLSANYIAKRLEPHYPVLYTGPGGLVAHECIIDLRPLTKATGVSVDDIAKRLIDYGFHAPTMSFPVAGTLMIEPTESEDLGELDRFCEAMIAIRAEVEKVGSGEWPAEDNPLRNAPHTAAALGGEWEHAYSREEAVFPAGVSAADKYWPPVRRIDQAFGDRNLVCSCPPLDAYDD.

Position 709 is an N6-(pyridoxal phosphate)lysine (Lys709).

It belongs to the GcvP family. As to quaternary structure, the glycine cleavage system is composed of four proteins: P, T, L and H. Requires pyridoxal 5'-phosphate as cofactor.

The catalysed reaction is N(6)-[(R)-lipoyl]-L-lysyl-[glycine-cleavage complex H protein] + glycine + H(+) = N(6)-[(R)-S(8)-aminomethyldihydrolipoyl]-L-lysyl-[glycine-cleavage complex H protein] + CO2. Its function is as follows. The glycine cleavage system catalyzes the degradation of glycine. The P protein binds the alpha-amino group of glycine through its pyridoxal phosphate cofactor; CO(2) is released and the remaining methylamine moiety is then transferred to the lipoamide cofactor of the H protein. In Streptomyces avermitilis (strain ATCC 31267 / DSM 46492 / JCM 5070 / NBRC 14893 / NCIMB 12804 / NRRL 8165 / MA-4680), this protein is Glycine dehydrogenase (decarboxylating).